The sequence spans 338 residues: 1-aminocyclopropane-1-carboxylate deaminase (338 aa).

Lysine 51 is modified (N6-(pyridoxal phosphate)lysine). Serine 78 acts as the Nucleophile in catalysis.

This sequence belongs to the ACC deaminase/D-cysteine desulfhydrase family. Homotrimer. It depends on pyridoxal 5'-phosphate as a cofactor.

The catalysed reaction is 1-aminocyclopropane-1-carboxylate + H2O = 2-oxobutanoate + NH4(+). Functionally, catalyzes a cyclopropane ring-opening reaction, the irreversible conversion of 1-aminocyclopropane-1-carboxylate (ACC) to ammonia and alpha-ketobutyrate. Allows growth on ACC as a nitrogen source. This is 1-aminocyclopropane-1-carboxylate deaminase from Burkholderia lata (strain ATCC 17760 / DSM 23089 / LMG 22485 / NCIMB 9086 / R18194 / 383).